Consider the following 591-residue polypeptide: V-type ATP synthase alpha chain (591 aa).

233-240 (GPFGAGKT) lines the ATP pocket.

It belongs to the ATPase alpha/beta chains family.

It carries out the reaction ATP + H2O + 4 H(+)(in) = ADP + phosphate + 5 H(+)(out). Functionally, produces ATP from ADP in the presence of a proton gradient across the membrane. The V-type alpha chain is a catalytic subunit. This Streptococcus pyogenes serotype M18 (strain MGAS8232) protein is V-type ATP synthase alpha chain.